The sequence spans 752 residues: Complement C2 (752 aa).

An N-terminal signal peptide occupies residues 1–20 (MGPLMVLFCLLFVYTGLADS). Sushi domains follow at residues 22–86 (PSCP…VCKP), 87–146 (VRCP…VCDN), and 149–206 (GHCP…ICRQ). Disulfide bonds link cysteine 24–cysteine 64, cysteine 51–cysteine 84, cysteine 89–cysteine 131, cysteine 117–cysteine 144, cysteine 151–cysteine 191, and cysteine 177–cysteine 204. A glycan (N-linked (GlcNAc...) asparagine) is linked at asparagine 29. Asparagine 112 carries an N-linked (GlcNAc...) asparagine glycan. The region spanning 254 to 452 (NLYLLLDCSQ…KALHQVFEHM (199 aa)) is the VWFA domain. The short motif at 260-264 (DCSQS) is the MIDAS-like motif element. Serine 262 and serine 264 together coordinate Mg(2+). 2 N-linked (GlcNAc...) asparagine glycosylation sites follow: asparagine 290 and asparagine 333. Position 337 (threonine 337) interacts with Mg(2+). 3 disulfides stabilise this stretch: cysteine 463-cysteine 581, cysteine 492-cysteine 508, and cysteine 584-cysteine 600. The 281-residue stretch at 464 to 744 (GVGNMSANAS…MQPWLRQHLG (281 aa)) folds into the Peptidase S1 domain. Asparagine 467 and asparagine 471 each carry an N-linked (GlcNAc...) asparagine glycan. Active-site charge relay system residues include histidine 507 and aspartate 561. 2 N-linked (GlcNAc...) asparagine glycosylation sites follow: asparagine 621 and asparagine 651. 2 disulfide bridges follow: cysteine 638–cysteine 665 and cysteine 675–cysteine 705. Catalysis depends on serine 679, which acts as the Charge relay system.

Belongs to the peptidase S1 family. As to quaternary structure, serine protease component of the C3 convertase, also named C4bC2b, composed of the serine protease complement C2b and complement C4b. Serine protease component of the C5 convertase, also named C4bC2bC3b, composed of the serine protease complement C2b, complement C3b, as well as complement C4b. Mg(2+) serves as cofactor. Mn(2+) is required as a cofactor. In terms of processing, cleaved and activated by different proteases depending on the complement pathway to generate complement C2a and serine protease complement C2b chains. Cleaved and activated by C1S following activation by the classical complement system. Cleaved and activated by MASP2 following activation by the lectin complement system. Cleaved and activated by GZMK following activation by the GZMK complement system.

The protein localises to the secreted. The protein resides in the cell surface. It catalyses the reaction Selective cleavage of Arg-|-Ser bond in complement component C3 alpha-chain to form C3a and C3b, and Arg-|-Xaa bond in complement component C5 alpha-chain to form C5a and C5b.. Precursor of the catalytic component of the C3 and C5 convertase complexes, which are part of the complement pathway, a cascade of proteins that leads to phagocytosis and breakdown of pathogens and signaling that strengthens the adaptive immune system. Component C2 is part of the classical, lectin and GZMK complement systems. Its function is as follows. Catalytic component of the complement C3 and C5 convertase complexes. Following complement activation, recruited to the surface of pathogens by complement C4b opsonin to form the C3 convertase, or C3b and C4b opsonins to form the C5 convertase. As part of the C3 convertase, cleaves and activate C3 into C3a anaphylatoxin and C3b opsonin, the next components of the complement pathways. As part of the C5 convertase, cleaves and activate C5 into C5a anaphylatoxin and C5b component of the membrane attack complex. In Gorilla gorilla gorilla (Western lowland gorilla), this protein is Complement C2.